Consider the following 468-residue polypeptide: Peroxisome proliferator-activated receptor alpha (468 aa).

Positions 99–173 (NIECRICGDK…VGMSHNAIRF (75 aa)) form a DNA-binding region, nuclear receptor. 2 consecutive NR C4-type zinc fingers follow at residues 102–122 (CRIC…CEGC) and 139–161 (CDRS…FHKC). An NR LBD domain is found at 239-466 (FVIHDMETLC…HPLLQEIYRD (228 aa)). Residues Ser280, Tyr314, and Tyr464 each coordinate indeglitazar. Positions 304–433 (DQVTLLKYGV…PKLLQKMADL (130 aa)) are required for heterodimerization with RXRA.

This sequence belongs to the nuclear hormone receptor family. NR1 subfamily. As to quaternary structure, heterodimer; with RXRA. This heterodimerization is required for DNA binding and transactivation activity. Interacts with NCOA3 coactivator. Interacts with CITED2; the interaction stimulates its transcriptional activity. Also interacts with PPARBP in vitro. Interacts with AKAP13, LPIN1, PRDM16 and coactivator NCOA6. Interacts with ASXL1 and ASXL2. Interacts with PER2. Interacts with SIRT1; the interaction seems to be modulated by NAD(+) levels. Interacts with CRY1 and CRY2. In hepatocytes, interacts with PAQR3 and HUWE1; the interactions promote PPARA poylubiquitination and HUWE1-mediated degradation. In terms of processing, ubiquitinated by E3 ubiquitin-protein ligase HUWE1; leading to proteasomal degradation. Phosphorylated. In terms of tissue distribution, skeletal muscle, liver, heart and kidney. Expressed in monocytes.

It localises to the nucleus. Ligand-activated transcription factor. Key regulator of lipid metabolism. Activated by the endogenous ligand 1-palmitoyl-2-oleoyl-sn-glycerol-3-phosphocholine (16:0/18:1-GPC). Activated by oleylethanolamide, a naturally occurring lipid that regulates satiety. Receptor for peroxisome proliferators such as hypolipidemic drugs and fatty acids. Regulates the peroxisomal beta-oxidation pathway of fatty acids. Functions as a transcription activator for the ACOX1 and P450 genes. Transactivation activity requires heterodimerization with RXRA and is antagonized by NR2C2. May be required for the propagation of clock information to metabolic pathways regulated by PER2. The sequence is that of Peroxisome proliferator-activated receptor alpha (PPARA) from Homo sapiens (Human).